A 319-amino-acid chain; its full sequence is Forkhead box protein E3 (319 aa).

Residues 1-69 (MAGRSDMDPP…GRRRRRPLQR (69 aa)) form a disordered region. Positions 44–53 (AAAGRGEAAP) are enriched in low complexity. Positions 71–165 (KPPYSYIALI…DNGSFLRRRK (95 aa)) form a DNA-binding region, fork-head.

It localises to the nucleus. Its function is as follows. Transcription factor that controls lens epithelial cell growth through regulation of proliferation, apoptosis and cell cycle. During lens development, controls the ratio of the lens fiber cells to the cells of the anterior lens epithelium by regulating the rate of proliferation and differentiation. Controls lens vesicle closure and subsequent separation of the lens vesicle from ectoderm. Controls the expression of DNAJB1 in a pathway that is crucial for the development of the anterior segment of the eye. The sequence is that of Forkhead box protein E3 (FOXE3) from Homo sapiens (Human).